A 370-amino-acid chain; its full sequence is Protein Brevis radix-like 3 (370 aa).

Positions 140 to 221 constitute a BRX 1 domain; that stretch reads KEWVAQVEPG…NFEKVMELYN (82 aa). Polar residues-rich tracts occupy residues 231–248 and 266–291; these read LQTPPVSEDGGSQIQSVK and PGSSGFASTPKLSSISGTKTETSSID. Residues 231 to 316 form a disordered region; sequence LQTPPVSEDG…VSNASDMESE (86 aa). The region spanning 315–370 is the BRX 2 domain; that stretch reads SEWVEQDEPGIYITIRALPDGNRELRRVRFSRDKFGETHARLWWEQNRARIQQQYL.

Belongs to the BRX family. Expressed in roots.

It is found in the nucleus. This Arabidopsis thaliana (Mouse-ear cress) protein is Protein Brevis radix-like 3 (BRXL3).